A 660-amino-acid chain; its full sequence is Bifunctional polymyxin resistance protein ArnA (660 aa).

A formyltransferase ArnAFT region spans residues 1-304 (MKTVVFAYHD…MLGLVQGSRL (304 aa)). 86–88 (HLI) provides a ligand contact to (6R)-10-formyltetrahydrofolate. The active-site Proton donor; for formyltransferase activity is the H104. (6R)-10-formyltetrahydrofolate contacts are provided by residues R114 and 136-140 (VKRAD). A dehydrogenase ArnADH region spans residues 314 to 660 (RRTRVLILGV…RTVDLTDKPS (347 aa)). NAD(+) contacts are provided by residues D347 and 368 to 369 (DI). Residues A393, Y398, and 432–433 (TS) contribute to the UDP-alpha-D-glucuronate site. E434 (proton acceptor; for decarboxylase activity) is an active-site residue. Residues R460, N492, 526 to 535 (KLIDGGKQKR), and Y613 each bind UDP-alpha-D-glucuronate. The Proton donor; for decarboxylase activity role is filled by R619.

This sequence in the N-terminal section; belongs to the Fmt family. UDP-L-Ara4N formyltransferase subfamily. The protein in the C-terminal section; belongs to the NAD(P)-dependent epimerase/dehydratase family. UDP-glucuronic acid decarboxylase subfamily. In terms of assembly, homohexamer, formed by a dimer of trimers.

It carries out the reaction UDP-alpha-D-glucuronate + NAD(+) = UDP-beta-L-threo-pentopyranos-4-ulose + CO2 + NADH. It catalyses the reaction UDP-4-amino-4-deoxy-beta-L-arabinose + (6R)-10-formyltetrahydrofolate = UDP-4-deoxy-4-formamido-beta-L-arabinose + (6S)-5,6,7,8-tetrahydrofolate + H(+). The protein operates within nucleotide-sugar biosynthesis; UDP-4-deoxy-4-formamido-beta-L-arabinose biosynthesis; UDP-4-deoxy-4-formamido-beta-L-arabinose from UDP-alpha-D-glucuronate: step 1/3. It functions in the pathway nucleotide-sugar biosynthesis; UDP-4-deoxy-4-formamido-beta-L-arabinose biosynthesis; UDP-4-deoxy-4-formamido-beta-L-arabinose from UDP-alpha-D-glucuronate: step 3/3. Its pathway is bacterial outer membrane biogenesis; lipopolysaccharide biosynthesis. Bifunctional enzyme that catalyzes the oxidative decarboxylation of UDP-glucuronic acid (UDP-GlcUA) to UDP-4-keto-arabinose (UDP-Ara4O) and the addition of a formyl group to UDP-4-amino-4-deoxy-L-arabinose (UDP-L-Ara4N) to form UDP-L-4-formamido-arabinose (UDP-L-Ara4FN). The modified arabinose is attached to lipid A and is required for resistance to polymyxin and cationic antimicrobial peptides. This is Bifunctional polymyxin resistance protein ArnA from Shigella sonnei (strain Ss046).